The primary structure comprises 187 residues: Large ribosomal subunit protein uL5 (187 aa).

It belongs to the universal ribosomal protein uL5 family. As to quaternary structure, part of the 50S ribosomal subunit; part of the 5S rRNA/L5/L18/L25 subcomplex. Contacts the 5S rRNA and the P site tRNA. Forms a bridge to the 30S subunit in the 70S ribosome.

Functionally, this is one of the proteins that bind and probably mediate the attachment of the 5S RNA into the large ribosomal subunit, where it forms part of the central protuberance. In the 70S ribosome it contacts protein S13 of the 30S subunit (bridge B1b), connecting the 2 subunits; this bridge is implicated in subunit movement. Contacts the P site tRNA; the 5S rRNA and some of its associated proteins might help stabilize positioning of ribosome-bound tRNAs. The polypeptide is Large ribosomal subunit protein uL5 (Ruegeria sp. (strain TM1040) (Silicibacter sp.)).